A 145-amino-acid polypeptide reads, in one-letter code: Large ribosomal subunit protein uL16 (145 aa).

Belongs to the universal ribosomal protein uL16 family. Part of the 50S ribosomal subunit.

In terms of biological role, binds 23S rRNA and is also seen to make contacts with the A and possibly P site tRNAs. The sequence is that of Large ribosomal subunit protein uL16 from Agathobacter rectalis (strain ATCC 33656 / DSM 3377 / JCM 17463 / KCTC 5835 / VPI 0990) (Eubacterium rectale).